The chain runs to 344 residues: Glycerol-3-phosphate dehydrogenase [NAD(P)+] (344 aa).

4 residues coordinate NADPH: Ser23, Trp24, Arg44, and Lys118. Positions 118, 147, and 149 each coordinate sn-glycerol 3-phosphate. Ala151 lines the NADPH pocket. 5 residues coordinate sn-glycerol 3-phosphate: Lys202, Asp255, Ser265, Arg266, and Asn267. Residue Lys202 is the Proton acceptor of the active site. Arg266 lines the NADPH pocket. Glu292 contacts NADPH.

The protein belongs to the NAD-dependent glycerol-3-phosphate dehydrogenase family.

The protein localises to the cytoplasm. The enzyme catalyses sn-glycerol 3-phosphate + NAD(+) = dihydroxyacetone phosphate + NADH + H(+). It catalyses the reaction sn-glycerol 3-phosphate + NADP(+) = dihydroxyacetone phosphate + NADPH + H(+). It participates in membrane lipid metabolism; glycerophospholipid metabolism. Functionally, catalyzes the reduction of the glycolytic intermediate dihydroxyacetone phosphate (DHAP) to sn-glycerol 3-phosphate (G3P), the key precursor for phospholipid synthesis. The polypeptide is Glycerol-3-phosphate dehydrogenase [NAD(P)+] (Nitrosococcus oceani (strain ATCC 19707 / BCRC 17464 / JCM 30415 / NCIMB 11848 / C-107)).